Consider the following 282-residue polypeptide: Ribosomal RNA small subunit methyltransferase A (282 aa).

S-adenosyl-L-methionine contacts are provided by asparagine 28, leucine 30, glycine 55, glutamate 77, aspartate 103, and asparagine 123.

Belongs to the class I-like SAM-binding methyltransferase superfamily. rRNA adenine N(6)-methyltransferase family. RsmA subfamily.

The protein localises to the cytoplasm. The enzyme catalyses adenosine(1518)/adenosine(1519) in 16S rRNA + 4 S-adenosyl-L-methionine = N(6)-dimethyladenosine(1518)/N(6)-dimethyladenosine(1519) in 16S rRNA + 4 S-adenosyl-L-homocysteine + 4 H(+). Specifically dimethylates two adjacent adenosines (A1518 and A1519) in the loop of a conserved hairpin near the 3'-end of 16S rRNA in the 30S particle. May play a critical role in biogenesis of 30S subunits. This Afipia carboxidovorans (strain ATCC 49405 / DSM 1227 / KCTC 32145 / OM5) (Oligotropha carboxidovorans) protein is Ribosomal RNA small subunit methyltransferase A.